An 80-amino-acid polypeptide reads, in one-letter code: Dermaseptin-DA3 (80 aa).

A signal peptide spans 1–22 (MAFLKKSLFLVLFLGLVSLSIC). A propeptide spanning residues 23 to 42 (EEKRENEDEEEQEDDEQSEE) is cleaved from the precursor. The interval 24–48 (EKRENEDEEEQEDDEQSEEKRGMWS) is disordered. Acidic residues predominate over residues 29–40 (EDEEEQEDDEQS). Leu77 is modified (leucine amide). A propeptide spanning residues 79 to 80 (EQ) is cleaved from the precursor.

Belongs to the frog skin active peptide (FSAP) family. Dermaseptin subfamily. As to expression, expressed by the skin glands.

The protein localises to the secreted. Functionally, possesses a potent antimicrobial activity against Gram-positive and Gram-negative bacteria. Probably acts by disturbing membrane functions with its amphipathic structure. The chain is Dermaseptin-DA3 from Agalychnis dacnicolor (Giant Mexican leaf frog).